A 277-amino-acid chain; its full sequence is Bifunctional protein FolD (277 aa).

NADP(+) is bound by residues 160 to 162, Ser185, and Ile226; that span reads GAS.

It belongs to the tetrahydrofolate dehydrogenase/cyclohydrolase family. In terms of assembly, homodimer.

The enzyme catalyses (6R)-5,10-methylene-5,6,7,8-tetrahydrofolate + NADP(+) = (6R)-5,10-methenyltetrahydrofolate + NADPH. It carries out the reaction (6R)-5,10-methenyltetrahydrofolate + H2O = (6R)-10-formyltetrahydrofolate + H(+). Its pathway is one-carbon metabolism; tetrahydrofolate interconversion. In terms of biological role, catalyzes the oxidation of 5,10-methylenetetrahydrofolate to 5,10-methenyltetrahydrofolate and then the hydrolysis of 5,10-methenyltetrahydrofolate to 10-formyltetrahydrofolate. This is Bifunctional protein FolD from Vesicomyosocius okutanii subsp. Calyptogena okutanii (strain HA).